We begin with the raw amino-acid sequence, 219 residues long: Thiamine-phosphate synthase (219 aa).

4-amino-2-methyl-5-(diphosphooxymethyl)pyrimidine contacts are provided by residues 44–48 (QFREK) and asparagine 79. Residues aspartate 80 and aspartate 99 each contribute to the Mg(2+) site. Position 117 (serine 117) interacts with 4-amino-2-methyl-5-(diphosphooxymethyl)pyrimidine. 143–145 (TST) contributes to the 2-[(2R,5Z)-2-carboxy-4-methylthiazol-5(2H)-ylidene]ethyl phosphate binding site. Lysine 146 serves as a coordination point for 4-amino-2-methyl-5-(diphosphooxymethyl)pyrimidine. Residues glycine 175 and 195–196 (IS) contribute to the 2-[(2R,5Z)-2-carboxy-4-methylthiazol-5(2H)-ylidene]ethyl phosphate site.

Belongs to the thiamine-phosphate synthase family. The cofactor is Mg(2+).

The enzyme catalyses 2-[(2R,5Z)-2-carboxy-4-methylthiazol-5(2H)-ylidene]ethyl phosphate + 4-amino-2-methyl-5-(diphosphooxymethyl)pyrimidine + 2 H(+) = thiamine phosphate + CO2 + diphosphate. The catalysed reaction is 2-(2-carboxy-4-methylthiazol-5-yl)ethyl phosphate + 4-amino-2-methyl-5-(diphosphooxymethyl)pyrimidine + 2 H(+) = thiamine phosphate + CO2 + diphosphate. It catalyses the reaction 4-methyl-5-(2-phosphooxyethyl)-thiazole + 4-amino-2-methyl-5-(diphosphooxymethyl)pyrimidine + H(+) = thiamine phosphate + diphosphate. Its pathway is cofactor biosynthesis; thiamine diphosphate biosynthesis; thiamine phosphate from 4-amino-2-methyl-5-diphosphomethylpyrimidine and 4-methyl-5-(2-phosphoethyl)-thiazole: step 1/1. Its function is as follows. Condenses 4-methyl-5-(beta-hydroxyethyl)thiazole monophosphate (THZ-P) and 2-methyl-4-amino-5-hydroxymethyl pyrimidine pyrophosphate (HMP-PP) to form thiamine monophosphate (TMP). This Bacillus anthracis (strain A0248) protein is Thiamine-phosphate synthase.